The sequence spans 722 residues: Pre-B-cell leukemia transcription factor-interacting protein 1 (722 aa).

Residues Met1–Ser10 are compositionally biased toward polar residues. The tract at residues Met1–Ala180 is disordered. Over residues Asp88 to Gly97 the composition is skewed to basic and acidic residues. Phosphoserine is present on residues Ser133, Ser144, Ser145, and Ser146. Thr150 carries the post-translational modification Phosphothreonine. Position 166 is a phosphoserine (Ser166). Coiled-coil stretches lie at residues Leu266–Asp346 and Asp373–Leu401. The span at Gln442–Ser453 shows a compositional bias: polar residues. Disordered stretches follow at residues Gln442–Ser562 and Arg691–Gly722. 2 stretches are compositionally biased toward basic and acidic residues: residues His465–Val536 and Ser546–Ser559. Residues Gln482–Trp502 carry the Nuclear localization signal motif. Ser559 bears the Phosphoserine mark. Residues Asp686 to Glu711 carry the Nuclear localization signal motif.

As to quaternary structure, interacts with ESR1, PBX1, PBX2 and PBX3. Interacts with TEX11.

Its subcellular location is the cytoplasm. The protein resides in the cytoskeleton. It localises to the nucleus. Functionally, regulator of pre-B-cell leukemia transcription factors (BPXs) function. Inhibits the binding of PBX1-HOX complex to DNA and blocks the transcriptional activity of E2A-PBX1. Tethers estrogen receptor-alpha (ESR1) to microtubules and allows them to influence estrogen receptors-alpha signaling. The polypeptide is Pre-B-cell leukemia transcription factor-interacting protein 1 (Pbxip1) (Rattus norvegicus (Rat)).